The sequence spans 491 residues: Proline--tRNA ligase (491 aa).

This sequence belongs to the class-II aminoacyl-tRNA synthetase family. ProS type 3 subfamily. Homodimer.

The protein resides in the cytoplasm. It carries out the reaction tRNA(Pro) + L-proline + ATP = L-prolyl-tRNA(Pro) + AMP + diphosphate. Catalyzes the attachment of proline to tRNA(Pro) in a two-step reaction: proline is first activated by ATP to form Pro-AMP and then transferred to the acceptor end of tRNA(Pro). This is Proline--tRNA ligase from Amoebophilus asiaticus (strain 5a2).